The following is a 934-amino-acid chain: Leucine--tRNA ligase 1 (934 aa).

A 'HIGH' region motif is present at residues 41–51 (PYTNSPMHVGH). The 'KMSKS' region signature appears at 616–620 (KMSKS). An ATP-binding site is contributed by Lys-619.

The protein belongs to the class-I aminoacyl-tRNA synthetase family.

Its subcellular location is the cytoplasm. It carries out the reaction tRNA(Leu) + L-leucine + ATP = L-leucyl-tRNA(Leu) + AMP + diphosphate. This chain is Leucine--tRNA ligase 1, found in Saccharolobus solfataricus (strain ATCC 35092 / DSM 1617 / JCM 11322 / P2) (Sulfolobus solfataricus).